Consider the following 502-residue polypeptide: Glycerol kinase (502 aa).

Thr-14 provides a ligand contact to ADP. Residues Thr-14, Thr-15, and Ser-16 each coordinate ATP. Thr-14 lines the sn-glycerol 3-phosphate pocket. Arg-18 lines the ADP pocket. Residues Arg-84, Glu-85, Tyr-136, and Asp-246 each coordinate sn-glycerol 3-phosphate. Glycerol is bound by residues Arg-84, Glu-85, Tyr-136, Asp-246, and Gln-247. Positions 268 and 311 each coordinate ADP. Positions 268, 311, 315, and 412 each coordinate ATP. The ADP site is built by Gly-412 and Asn-416.

This sequence belongs to the FGGY kinase family. As to quaternary structure, homotetramer and homodimer (in equilibrium). Heterodimer with EIIA-Glc. Binds 1 zinc ion per glycerol kinase EIIA-Glc dimer. The zinc ion is important for dimerization.

The enzyme catalyses glycerol + ATP = sn-glycerol 3-phosphate + ADP + H(+). It functions in the pathway polyol metabolism; glycerol degradation via glycerol kinase pathway; sn-glycerol 3-phosphate from glycerol: step 1/1. Its activity is regulated as follows. Activity of this regulatory enzyme is affected by several metabolites. Allosterically and non-competitively inhibited by fructose 1,6-bisphosphate (FBP) and unphosphorylated phosphocarrier protein EIIA-Glc (III-Glc), an integral component of the bacterial phosphotransferase (PTS) system. Key enzyme in the regulation of glycerol uptake and metabolism. Catalyzes the phosphorylation of glycerol to yield sn-glycerol 3-phosphate. This Shigella dysenteriae serotype 1 (strain Sd197) protein is Glycerol kinase.